A 323-amino-acid polypeptide reads, in one-letter code: tRNA dimethylallyltransferase (323 aa).

12–19 (GPTAAGKT) lines the ATP pocket. Position 14–19 (14–19 (TAAGKT)) interacts with substrate. 2 interaction with substrate tRNA regions span residues 37-40 (DSAL) and 161-165 (QRLIR).

It belongs to the IPP transferase family. In terms of assembly, monomer. It depends on Mg(2+) as a cofactor.

The catalysed reaction is adenosine(37) in tRNA + dimethylallyl diphosphate = N(6)-dimethylallyladenosine(37) in tRNA + diphosphate. Its function is as follows. Catalyzes the transfer of a dimethylallyl group onto the adenine at position 37 in tRNAs that read codons beginning with uridine, leading to the formation of N6-(dimethylallyl)adenosine (i(6)A). This chain is tRNA dimethylallyltransferase, found in Pseudomonas putida (strain GB-1).